The sequence spans 131 residues: Hydrogenase maturation factor HypA (131 aa).

Position 2 (histidine 2) interacts with Ni(2+). Zn(2+)-binding residues include cysteine 74, cysteine 77, cysteine 91, and cysteine 94.

The protein belongs to the HypA/HybF family.

Functionally, involved in the maturation of [NiFe] hydrogenases. Required for nickel insertion into the metal center of the hydrogenase. The sequence is that of Hydrogenase maturation factor HypA from Streptomyces avermitilis (strain ATCC 31267 / DSM 46492 / JCM 5070 / NBRC 14893 / NCIMB 12804 / NRRL 8165 / MA-4680).